Here is a 377-residue protein sequence, read N- to C-terminus: MAKQDYYEILGVERGADEKAIKKAYKRLAMKYHPDRTKGDKTSEEKFKEINEAYEILSDKEKRAAYDQYGHAAFEQGGFGGAGAGGFGGGFGGFGGFEDIFSEMFGGGSSRQRVVRGDDLRYDIEITLEEAVRGITKDIQIQTLATCDHCNGSGAEKGSKVETCPTCHGHGRVRRQQGFFMTETTCPHCHGTGKKIEKPCKKCHGDGRVHKTESLSVKIPAGVDTGNQLRLAGKGAAGENGAPAGDLYVVIHVKEHHIFERDGNNLYCEVPISFTQAALGGEIEVPTLDGRAKLKIPEGTQTGTMFRMRGKGITAMRSGYSGDLICKITVETPVKLTDEQKDLLHKLEASLEGKTTQRPKSSSFLDGVKKFFDNLGK.

The region spanning aspartate 5–glycine 70 is the J domain. Residues glycine 134–threonine 212 form a CR-type zinc finger. Zn(2+)-binding residues include cysteine 147, cysteine 150, cysteine 164, cysteine 167, cysteine 186, cysteine 189, cysteine 200, and cysteine 203. CXXCXGXG motif repeat units follow at residues cysteine 147–glycine 154, cysteine 164–glycine 171, cysteine 186–glycine 193, and cysteine 200–glycine 207.

It belongs to the DnaJ family. In terms of assembly, homodimer. Zn(2+) serves as cofactor.

It is found in the cytoplasm. Functionally, participates actively in the response to hyperosmotic and heat shock by preventing the aggregation of stress-denatured proteins and by disaggregating proteins, also in an autonomous, DnaK-independent fashion. Unfolded proteins bind initially to DnaJ; upon interaction with the DnaJ-bound protein, DnaK hydrolyzes its bound ATP, resulting in the formation of a stable complex. GrpE releases ADP from DnaK; ATP binding to DnaK triggers the release of the substrate protein, thus completing the reaction cycle. Several rounds of ATP-dependent interactions between DnaJ, DnaK and GrpE are required for fully efficient folding. Also involved, together with DnaK and GrpE, in the DNA replication of plasmids through activation of initiation proteins. The protein is Chaperone protein DnaJ of Actinobacillus succinogenes (strain ATCC 55618 / DSM 22257 / CCUG 43843 / 130Z).